The sequence spans 538 residues: Chaperonin GroEL (538 aa).

ATP-binding positions include 29–32 (TIGP), 86–90 (DGTTT), Gly413, 476–478 (NAA), and Asp492.

This sequence belongs to the chaperonin (HSP60) family. Forms a cylinder of 14 subunits composed of two heptameric rings stacked back-to-back. Interacts with the co-chaperonin GroES.

It localises to the cytoplasm. The catalysed reaction is ATP + H2O + a folded polypeptide = ADP + phosphate + an unfolded polypeptide.. In terms of biological role, together with its co-chaperonin GroES, plays an essential role in assisting protein folding. The GroEL-GroES system forms a nano-cage that allows encapsulation of the non-native substrate proteins and provides a physical environment optimized to promote and accelerate protein folding. The polypeptide is Chaperonin GroEL (Staphylococcus aureus (strain USA300)).